An 886-amino-acid polypeptide reads, in one-letter code: Isoleucine--tRNA ligase (886 aa).

Positions 60–70 (PYANGDIHIGH) match the 'HIGH' region motif. Glu-546 is an L-isoleucyl-5'-AMP binding site. A 'KMSKS' region motif is present at residues 587–591 (KMSKS). Lys-590 contacts ATP. The Zn(2+) site is built by Cys-856, Cys-859, Cys-870, and Cys-873.

It belongs to the class-I aminoacyl-tRNA synthetase family. IleS type 1 subfamily. As to quaternary structure, monomer. Zn(2+) serves as cofactor.

It localises to the cytoplasm. The catalysed reaction is tRNA(Ile) + L-isoleucine + ATP = L-isoleucyl-tRNA(Ile) + AMP + diphosphate. Catalyzes the attachment of isoleucine to tRNA(Ile). As IleRS can inadvertently accommodate and process structurally similar amino acids such as valine, to avoid such errors it has two additional distinct tRNA(Ile)-dependent editing activities. One activity is designated as 'pretransfer' editing and involves the hydrolysis of activated Val-AMP. The other activity is designated 'posttransfer' editing and involves deacylation of mischarged Val-tRNA(Ile). In Mesomycoplasma hyopneumoniae (strain J / ATCC 25934 / NCTC 10110) (Mycoplasma hyopneumoniae), this protein is Isoleucine--tRNA ligase.